Here is a 321-residue protein sequence, read N- to C-terminus: Chitinase-like protein 1 (321 aa).

Residues 1–26 (MVTIRSGSIVILVLLAVSFLALVANG) form the signal peptide. A disulfide bridge links cysteine 42 with cysteine 55. Asparagine 57 carries an N-linked (GlcNAc...) asparagine glycan. Residues cysteine 157 and cysteine 167 are joined by a disulfide bond. N-linked (GlcNAc...) asparagine glycans are attached at residues asparagine 208 and asparagine 244. An intrachain disulfide couples cysteine 267 to cysteine 304. The disordered stretch occupies residues 297 to 321 (GPNDELSCAEQKPFNPSTVPSSSSS). Residues 310 to 321 (FNPSTVPSSSSS) show a composition bias toward polar residues.

Belongs to the glycosyl hydrolase 19 family. As to expression, mostly expressed in seedlings shoots and roots, stems, and flowers, and, to a lower extent, in flowers, mature leaves and roots.

The protein localises to the secreted. In terms of biological role, no chitinase activity. Essential for normal plant growth and development. Regulates cell expansion extent and differentiation at least in roots and hypocotyls. Prevents lignin accumulation in the pith. May modulate ethylene-mediated regulation during development. Probably required to establish thermotolerance acclimation. Plays a role for controlled anisotropic cell expansion in the regulation of waving during root gravitropism and thigmotropism. Involved in the root system architecture adaptation to multiple environmental conditions such as nitrate. Contributes to salt tolerance and possibly to drought by preventing the overaccumulation of sodium ions. This chain is Chitinase-like protein 1 (CTL1), found in Arabidopsis thaliana (Mouse-ear cress).